A 390-amino-acid chain; its full sequence is Cystathionine beta-lyase MetC (390 aa).

Residue K200 is modified to N6-(pyridoxal phosphate)lysine.

It belongs to the trans-sulfuration enzymes family. As to quaternary structure, homotetramer. The cofactor is pyridoxal 5'-phosphate.

The protein localises to the cytoplasm. It carries out the reaction L,L-cystathionine + H2O = L-homocysteine + pyruvate + NH4(+). The enzyme catalyses an S-substituted L-cysteine + H2O = a thiol + pyruvate + NH4(+). It functions in the pathway amino-acid biosynthesis; L-methionine biosynthesis via de novo pathway; L-homocysteine from L-cystathionine: step 1/1. Catalyzes the transformation of cystathionine into homocysteine. Also exhibits cysteine desulfhydrase activity in vitro, producing sulfide from cysteine. The chain is Cystathionine beta-lyase MetC (metC) from Bacillus subtilis (strain 168).